The sequence spans 471 residues: Neuraminidase (471 aa).

Residues Met-1–Lys-6 lie on the Intravirion side of the membrane. A helical membrane pass occupies residues Leu-7 to Ser-27. The interval Ser-11–Val-33 is involved in apical transport and lipid raft association. Residues Asn-28–Ser-471 lie on the Virion surface side of the membrane. 7 N-linked (GlcNAc...) asparagine; by host glycosylation sites follow: Asn-32, Asn-47, Asn-56, Asn-57, Asn-67, Asn-68, and Asn-87. The interval His-36 to Asn-87 is hypervariable stalk region. The head of neuraminidase stretch occupies residues Leu-90–Ser-471. 8 cysteine pairs are disulfide-bonded: Cys-91/Cys-419, Cys-123/Cys-128, Cys-183/Cys-230, Cys-232/Cys-237, Cys-278/Cys-291, Cys-280/Cys-289, Cys-318/Cys-336, and Cys-423/Cys-450. Arg-117 contacts substrate. A glycan (N-linked (GlcNAc...) asparagine; by host) is linked at Asn-145. Asp-150 functions as the Proton donor/acceptor in the catalytic mechanism. Substrate is bound at residue Arg-151. Asn-200 and Asn-234 each carry an N-linked (GlcNAc...) asparagine; by host glycan. Glu-276–Glu-277 lines the substrate pocket. Arg-292 provides a ligand contact to substrate. 3 residues coordinate Ca(2+): Asp-293, Gly-297, and Asp-324. Arg-371 is a substrate binding site. The N-linked (GlcNAc...) asparagine; by host glycan is linked to Asn-401. The active-site Nucleophile is Tyr-405.

The protein belongs to the glycosyl hydrolase 34 family. Homotetramer. It depends on Ca(2+) as a cofactor. Post-translationally, N-glycosylated.

It localises to the virion membrane. The protein localises to the host apical cell membrane. It carries out the reaction Hydrolysis of alpha-(2-&gt;3)-, alpha-(2-&gt;6)-, alpha-(2-&gt;8)- glycosidic linkages of terminal sialic acid residues in oligosaccharides, glycoproteins, glycolipids, colominic acid and synthetic substrates.. Its activity is regulated as follows. Inhibited by the neuraminidase inhibitors zanamivir (Relenza) and oseltamivir (Tamiflu). These drugs interfere with the release of progeny virus from infected cells and are effective against all influenza strains. Resistance to neuraminidase inhibitors is quite rare. In terms of biological role, catalyzes the removal of terminal sialic acid residues from viral and cellular glycoconjugates. Cleaves off the terminal sialic acids on the glycosylated HA during virus budding to facilitate virus release. Additionally helps virus spread through the circulation by further removing sialic acids from the cell surface. These cleavages prevent self-aggregation and ensure the efficient spread of the progeny virus from cell to cell. Otherwise, infection would be limited to one round of replication. Described as a receptor-destroying enzyme because it cleaves a terminal sialic acid from the cellular receptors. May facilitate viral invasion of the upper airways by cleaving the sialic acid moieties on the mucin of the airway epithelial cells. Likely to plays a role in the budding process through its association with lipid rafts during intracellular transport. May additionally display a raft-association independent effect on budding. Plays a role in the determination of host range restriction on replication and virulence. Sialidase activity in late endosome/lysosome traffic seems to enhance virus replication. This is Neuraminidase from Influenza A virus (strain A/Duck/Germany/1949 H10N7).